Consider the following 153-residue polypeptide: MAPKADKKPAAKKPAEEEPATEKAEKAPAGKKPKAEKRLPAGKSAGKEGGEGKKGKKKAKKSVETYKIYIFKVLKQVHPDIGISSKAMSIMNSFINDIFEKLAAESAKLARYNKKPTVTSREIQTSVRLVLPGELAKHAVSEGTKAVTKFTSS.

Residues 1–28 show a composition bias toward basic and acidic residues; the sequence is MAPKADKKPAAKKPAEEEPATEKAEKAP. The interval 1 to 60 is disordered; the sequence is MAPKADKKPAAKKPAEEEPATEKAEKAPAGKKPKAEKRLPAGKSAGKEGGEGKKGKKKAK. N6-acetyllysine is present on residues lysine 7 and lysine 37. A Glycyl lysine isopeptide (Lys-Gly) (interchain with G-Cter in ubiquitin) cross-link involves residue lysine 149.

The protein belongs to the histone H2B family. The nucleosome is a histone octamer containing two molecules each of H2A, H2B, H3 and H4 assembled in one H3-H4 heterotetramer and two H2A-H2B heterodimers. The octamer wraps approximately 147 bp of DNA. In terms of processing, can be acetylated to form H2BK6ac and H2BK33ac. Post-translationally, monoubiquitinated to form H2BK143ub1; may give a specific tag for epigenetic transcriptional activation.

The protein resides in the nucleus. It localises to the chromosome. Its function is as follows. Core component of nucleosome. Nucleosomes wrap and compact DNA into chromatin, limiting DNA accessibility to the cellular machineries which require DNA as a template. Histones thereby play a central role in transcription regulation, DNA repair, DNA replication and chromosomal stability. DNA accessibility is regulated via a complex set of post-translational modifications of histones, also called histone code, and nucleosome remodeling. The polypeptide is Histone H2B.3 (Zea mays (Maize)).